The sequence spans 605 residues: MAESDGVEFFANRAQSSMADNKNSVLRCTFSAPSHSSTLLRGLSALRDQGQLLDVVLAIDNERFEVHKAVLASCSDYFRAMFTGGMKESNQNTIELIGLSARGLKHIIDFAYSSEVTLDLDCIQDVLGAAVFLQMVPVVELCEEFLKSAMSVETCLNIGQMATTFSLSSLKQSVDAYTFRHFLQIAQEDDFLHIPMERLTFFLQSNKLKNCSEIDLFHAAIRWLQHDASRRTVASEVLCHVRFPLMRSSELVDSVQIVDIMVEDVQCRHFLLEAFNYQILPFRQHEMQSPRTSIRSDITSLITFGGTPYTDNDRTVSSKVYFLPDITVRQFKELTEMEMGCSHACVSVLDNFVYVVGGQHLQYRSGEGAVDICFRYDPHLNQWLRIQPMQESRIQFQLNVLDGQLYATGGRNRSGSLSSVECYCPKKNEWTNVDSLKRRIWGHAGATCGDKLYISGGYGVSVEDKKTLHCYDSALDQWDFKCPMNEPRVLHAMISANNRIYALGGRMDHVDRCFDVLAVEYYIPETDQWTTVSPMRAGQSEAGCCLLDKKIYIVGGYNWHLNNVTSIVQVYNTETDEWERDLHFPESFAGIACTPIILPQTTTQR.

Residues 53 to 120 (LDVVLAIDNE…AYSSEVTLDL (68 aa)) enclose the BTB domain. Residues 155–256 (CLNIGQMATT…RSSELVDSVQ (102 aa)) form the BACK domain. Kelch repeat units follow at residues 300-351 (SLIT…VLDN), 352-403 (FVYV…VLDG), 404-450 (QLYA…TCGD), 452-498 (LYIS…SANN), 499-549 (RIYA…LLDK), and 551-598 (IYIV…PIIL).

Functionally, may play a role in endo(sarco)plasmic reticulum (ER/SR) mitochondrial signaling. May be part of the ubiquitin-proteasome system (UPS) and affect ubiquitination and degradation of target substrates. The protein is Kelch-like protein 26 (klhl26) of Danio rerio (Zebrafish).